Here is a 371-residue protein sequence, read N- to C-terminus: O-antigen chain mannosyltransferase C (371 aa).

Belongs to the glycosyltransferase group 1 family. Glycosyltransferase 4 subfamily.

The enzyme catalyses N-acetyl-alpha-D-glucosaminyl-di-trans,octa-cis-undecaprenyl diphosphate + GDP-alpha-D-mannose = alpha-D-mannosyl-(1-&gt;3)-N-acetyl-alpha-D-glucosaminyl-di-trans,octa-cis-undecaprenyl diphosphate + GDP + H(+). It functions in the pathway bacterial outer membrane biogenesis; LPS O-antigen biosynthesis. Its function is as follows. Mannosyltransferase involved in the biosynthesis of the repeat unit of the lipopolysaccharide (LPS) O-antigen region. Catalyzes the transfer of a single alpha-(1-&gt;3)-linked mannose residue to the acceptor N-acetyl-glucosaminyl-diphospho-undecaprenol during the synthesis of the adapter region. This is O-antigen chain mannosyltransferase C from Escherichia coli.